We begin with the raw amino-acid sequence, 94 residues long: Phosphoribosyl-ATP pyrophosphatase (94 aa).

This sequence belongs to the PRA-PH family.

The protein resides in the cytoplasm. It carries out the reaction 1-(5-phospho-beta-D-ribosyl)-ATP + H2O = 1-(5-phospho-beta-D-ribosyl)-5'-AMP + diphosphate + H(+). The protein operates within amino-acid biosynthesis; L-histidine biosynthesis; L-histidine from 5-phospho-alpha-D-ribose 1-diphosphate: step 2/9. The chain is Phosphoribosyl-ATP pyrophosphatase (hisE) from Pyrobaculum aerophilum (strain ATCC 51768 / DSM 7523 / JCM 9630 / CIP 104966 / NBRC 100827 / IM2).